The sequence spans 74 residues: UPF0346 protein YozE (74 aa).

This sequence belongs to the UPF0346 family.

The chain is UPF0346 protein YozE (yozE) from Bacillus subtilis (strain 168).